The sequence spans 264 residues: Chymotrypsin-like protease CTRL-1 (264 aa).

Residues methionine 1–glycine 18 form the signal peptide. A propeptide spans cysteine 19–arginine 33 (activation peptide). Cystine bridges form between cysteine 19–cysteine 141, cysteine 60–cysteine 76, cysteine 155–cysteine 220, cysteine 187–cysteine 201, and cysteine 210–cysteine 239. In terms of domain architecture, Peptidase S1 spans isoleucine 34 to alanine 262. The active-site Charge relay system is the histidine 75. Residue asparagine 114 is glycosylated (N-linked (GlcNAc...) asparagine). Aspartate 121 acts as the Charge relay system in catalysis. Serine 214 (charge relay system) is an active-site residue.

Belongs to the peptidase S1 family.

This chain is Chymotrypsin-like protease CTRL-1 (CTRL), found in Homo sapiens (Human).